A 274-amino-acid chain; its full sequence is Dehydration-responsive element-binding protein 2A (274 aa).

Basic and acidic residues-rich tracts occupy residues 1 to 10 (MERGEGRRGD) and 35 to 50 (KWWK…ENSS). The tract at residues 1–75 (MERGEGRRGD…KGGPENSNCA (75 aa)) is disordered. A DNA-binding region (AP2/ERF) is located at residues 75–132 (AYRGVRQRTWGKWVAEIREPNRGRRLWLGSFPTALEAAHAYDEAARAMYGPTARVNFA).

The protein belongs to the AP2/ERF transcription factor family. ERF subfamily.

It is found in the nucleus. Transcriptional activator that binds specifically to the DNA sequence 5'-[AG]CCGAC-3'. Binding to the C-repeat/DRE element mediates high salinity- and dehydration-inducible transcription. This chain is Dehydration-responsive element-binding protein 2A (DREB2A), found in Oryza sativa subsp. indica (Rice).